We begin with the raw amino-acid sequence, 485 residues long: Glutamyl-tRNA(Gln) amidotransferase subunit A (485 aa).

Active-site charge relay system residues include K80 and S155. S179 (acyl-ester intermediate) is an active-site residue.

The protein belongs to the amidase family. GatA subfamily. As to quaternary structure, heterotrimer of A, B and C subunits.

It catalyses the reaction L-glutamyl-tRNA(Gln) + L-glutamine + ATP + H2O = L-glutaminyl-tRNA(Gln) + L-glutamate + ADP + phosphate + H(+). Its function is as follows. Allows the formation of correctly charged Gln-tRNA(Gln) through the transamidation of misacylated Glu-tRNA(Gln) in organisms which lack glutaminyl-tRNA synthetase. The reaction takes place in the presence of glutamine and ATP through an activated gamma-phospho-Glu-tRNA(Gln). The protein is Glutamyl-tRNA(Gln) amidotransferase subunit A of Endomicrobium trichonymphae.